We begin with the raw amino-acid sequence, 216 residues long: Large ribosomal subunit protein uL3 (216 aa).

Residues 135–156 (LGASHGTQRKHRSPGSIGGCAT) are disordered.

It belongs to the universal ribosomal protein uL3 family. Part of the 50S ribosomal subunit. Forms a cluster with proteins L14 and L19.

One of the primary rRNA binding proteins, it binds directly near the 3'-end of the 23S rRNA, where it nucleates assembly of the 50S subunit. In Thermobifida fusca (strain YX), this protein is Large ribosomal subunit protein uL3.